We begin with the raw amino-acid sequence, 465 residues long: Chromosomal replication initiator protein DnaA (465 aa).

The tract at residues 1–87 (MLWTDCLTRL…RPGSILSSSE (87 aa)) is domain I, interacts with DnaA modulators. Positions 81–123 (SILSSSEQPATTTAALQTAPIPQPAKVKREPEPVANTAVSSKS) are disordered. Low complexity predominate over residues 88 to 100 (QPATTTAALQTAP). The domain II stretch occupies residues 88 to 127 (QPATTTAALQTAPIPQPAKVKREPEPVANTAVSSKSSKKK). Positions 128–345 (LLNPQFTFSL…GALNKVVAIS (218 aa)) are domain III, AAA+ region. ATP contacts are provided by glycine 173, glycine 175, lysine 176, and threonine 177. The segment at 346–465 (RFKGAPIDLD…YKNLLRLLQS (120 aa)) is domain IV, binds dsDNA.

Belongs to the DnaA family. Oligomerizes as a right-handed, spiral filament on DNA at oriC.

The protein localises to the cytoplasm. Its function is as follows. Plays an essential role in the initiation and regulation of chromosomal replication. ATP-DnaA binds to the origin of replication (oriC) to initiate formation of the DNA replication initiation complex once per cell cycle. Binds the DnaA box (a 9 base pair repeat at the origin) and separates the double-stranded (ds)DNA. Forms a right-handed helical filament on oriC DNA; dsDNA binds to the exterior of the filament while single-stranded (ss)DNA is stabiized in the filament's interior. The ATP-DnaA-oriC complex binds and stabilizes one strand of the AT-rich DNA unwinding element (DUE), permitting loading of DNA polymerase. After initiation quickly degrades to an ADP-DnaA complex that is not apt for DNA replication. Binds acidic phospholipids. The polypeptide is Chromosomal replication initiator protein DnaA (Acinetobacter baumannii (strain AB307-0294)).